The primary structure comprises 453 residues: Putative F-box/FBD/LRR-repeat protein At1g66290 (453 aa).

The segment at 1 to 28 (MDEDGERRVRTKRSCSPESSDNGSGDEV) is disordered. The segment covering 14–23 (SCSPESSDNG) has biased composition (polar residues). An F-box domain is found at 28–81 (VDWISDLPEALIVLVLLNLPTKDVIKTSVLSTKWRNIWRYVPRLDLDNRHFTEF). 5 LRR repeats span residues 155-179 (SLKL…VLVL), 210-235 (LDNV…SSKS), 246-269 (APKL…NLSS), 305-329 (LSRV…RCEP), and 358-381 (CSNL…IISE). The region spanning 373–423 (RKRTSIISEPRCLLSSLEYVKIEFALDKGKMELVRYLLENSPILKKLTLSL) is the FBD domain.

The polypeptide is Putative F-box/FBD/LRR-repeat protein At1g66290 (Arabidopsis thaliana (Mouse-ear cress)).